Reading from the N-terminus, the 240-residue chain is tRNA (guanine-N(1)-)-methyltransferase (240 aa).

S-adenosyl-L-methionine-binding positions include G110 and 129–134; that span reads LGDFVL.

It belongs to the RNA methyltransferase TrmD family. In terms of assembly, homodimer.

The protein localises to the cytoplasm. It carries out the reaction guanosine(37) in tRNA + S-adenosyl-L-methionine = N(1)-methylguanosine(37) in tRNA + S-adenosyl-L-homocysteine + H(+). Specifically methylates guanosine-37 in various tRNAs. The chain is tRNA (guanine-N(1)-)-methyltransferase from Clostridium botulinum (strain 657 / Type Ba4).